Here is a 345-residue protein sequence, read N- to C-terminus: Nuclear distribution protein nudE-like 1-A (345 aa).

Residues Trp19–Gly190 are a coiled coil. Residues Ala182 to Arg192 show a composition bias toward basic and acidic residues. Disordered stretches follow at residues Ala182–Thr206 and Pro326–Val345. Pro residues predominate over residues Pro334–Val345.

The protein belongs to the nudE family. Post-translationally, phosphorylated in mitosis.

It is found in the cytoplasm. The protein resides in the cytoskeleton. The protein localises to the microtubule organizing center. Its subcellular location is the centrosome. It localises to the spindle. Required for organization of the cellular microtubule array and microtubule anchoring at the centrosome. Positively regulates the activity of the minus-end directed microtubule motor protein dynein. May enhance dynein-mediated microtubule sliding by targeting dynein to the microtubule plus end. Positively regulates lysosome peripheral distribution and ruffled border formation in osteoclasts. This is Nuclear distribution protein nudE-like 1-A (ndel1-a) from Xenopus laevis (African clawed frog).